A 1051-amino-acid polypeptide reads, in one-letter code: Carbamoyl phosphate synthase large chain (1051 aa).

Positions 1-399 (MRETPKKVLV…SLQKAIRMLD (399 aa)) are carboxyphosphate synthetic domain. The ATP site is built by R127, R167, G173, G174, K206, L208, E213, G239, V240, H241, Q282, and E296. In terms of domain architecture, ATP-grasp 1 spans 131 to 325 (RETMIENNLP…LAYVSAKLAL (195 aa)). 3 residues coordinate Mg(2+): Q282, E296, and N298. 3 residues coordinate Mn(2+): Q282, E296, and N298. The oligomerization domain stretch occupies residues 400–548 (IGEPGVVGGK…LTYNGTEDDI (149 aa)). Residues 549-930 (EFSQGNKLLI…LKSWLSSMPN (382 aa)) form a carbamoyl phosphate synthetic domain region. Residues 673–863 (SKLLDKLGIS…LINESMKAIF (191 aa)) form the ATP-grasp 2 domain. Positions 709, 748, 750, 755, 779, 780, 781, 782, 822, and 834 each coordinate ATP. Residues Q822, E834, and N836 each coordinate Mg(2+). The Mn(2+) site is built by Q822, E834, and N836. The MGS-like domain occupies 930–1051 (NRIPNKNGIA…FEISEYGGGI (122 aa)). The interval 931-1051 (RIPNKNGIAL…FEISEYGGGI (121 aa)) is allosteric domain.

It belongs to the CarB family. In terms of assembly, composed of two chains; the small (or glutamine) chain promotes the hydrolysis of glutamine to ammonia, which is used by the large (or ammonia) chain to synthesize carbamoyl phosphate. Tetramer of heterodimers (alpha,beta)4. Mg(2+) is required as a cofactor. Requires Mn(2+) as cofactor.

The enzyme catalyses hydrogencarbonate + L-glutamine + 2 ATP + H2O = carbamoyl phosphate + L-glutamate + 2 ADP + phosphate + 2 H(+). It catalyses the reaction hydrogencarbonate + NH4(+) + 2 ATP = carbamoyl phosphate + 2 ADP + phosphate + 2 H(+). It participates in amino-acid biosynthesis; L-arginine biosynthesis; carbamoyl phosphate from bicarbonate: step 1/1. It functions in the pathway pyrimidine metabolism; UMP biosynthesis via de novo pathway; (S)-dihydroorotate from bicarbonate: step 1/3. Functionally, large subunit of the glutamine-dependent carbamoyl phosphate synthetase (CPSase). CPSase catalyzes the formation of carbamoyl phosphate from the ammonia moiety of glutamine, carbonate, and phosphate donated by ATP, constituting the first step of 2 biosynthetic pathways, one leading to arginine and/or urea and the other to pyrimidine nucleotides. The large subunit (synthetase) binds the substrates ammonia (free or transferred from glutamine from the small subunit), hydrogencarbonate and ATP and carries out an ATP-coupled ligase reaction, activating hydrogencarbonate by forming carboxy phosphate which reacts with ammonia to form carbamoyl phosphate. The protein is Carbamoyl phosphate synthase large chain of Saccharolobus solfataricus (strain ATCC 35092 / DSM 1617 / JCM 11322 / P2) (Sulfolobus solfataricus).